The sequence spans 256 residues: Ras-related protein Rab-26 (256 aa).

Positions 1-51 are disordered; that stretch reads MSRKKTPKSKGASTPAASTLPTANGARPARSGTALSGPDAPPNGPLQPGRP. Residues 12-23 show a composition bias toward low complexity; it reads ASTPAASTLPTA. Residues Ser-72, Gly-73, Val-74, Gly-75, Lys-76, Thr-77, Cys-78, Ser-95, and Thr-96 each contribute to the GTP site. Position 77 (Thr-77) interacts with Mg(2+). 2 consecutive short sequence motifs (switch) follow at residues 86–101 and 119–136; these read GAFL…GIDF and DTAG…YYRD. Residues Thr-96 and Asp-119 each contribute to the Mg(2+) site. 6 residues coordinate GTP: Gly-122, Asn-177, Lys-178, Asp-180, Ala-208, and Lys-209. S-geranylgeranyl cysteine attachment occurs at residues Cys-253 and Cys-254.

This sequence belongs to the small GTPase superfamily. Rab family. In terms of assembly, interacts with RIMS1. Interacts with ADRA2B. It depends on Mg(2+) as a cofactor. Predominantly expressed in brain.

It is found in the golgi apparatus membrane. The protein localises to the cytoplasmic vesicle. Its subcellular location is the secretory vesicle membrane. The catalysed reaction is GTP + H2O = GDP + phosphate + H(+). With respect to regulation, regulated by guanine nucleotide exchange factors (GEFs) which promote the exchange of bound GDP for free GTP. Regulated by GTPase activating proteins (GAPs) which increase the GTP hydrolysis activity. Inhibited by GDP dissociation inhibitors (GDIs). In terms of biological role, the small GTPases Rab are key regulators of intracellular membrane trafficking, from the formation of transport vesicles to their fusion with membranes. Rabs cycle between an inactive GDP-bound form and an active GTP-bound form that is able to recruit to membranes different set of downstream effectors directly responsible for vesicle formation, movement, tethering and fusion. RAB26 mediates transport of ADRA2A and ADRA2B from the Golgi to the cell membrane. Plays a role in the maturation of zymogenic granules and in pepsinogen secretion in the stomach. Plays a role in the secretion of amylase from acinar granules in the parotid gland. The protein is Ras-related protein Rab-26 of Homo sapiens (Human).